The sequence spans 185 residues: Peptidyl-tRNA hydrolase (185 aa).

Y14 contributes to the tRNA binding site. The active-site Proton acceptor is H19. Residues F64, N66, and N112 each coordinate tRNA.

The protein belongs to the PTH family. In terms of assembly, monomer.

The protein resides in the cytoplasm. It catalyses the reaction an N-acyl-L-alpha-aminoacyl-tRNA + H2O = an N-acyl-L-amino acid + a tRNA + H(+). Functionally, hydrolyzes ribosome-free peptidyl-tRNAs (with 1 or more amino acids incorporated), which drop off the ribosome during protein synthesis, or as a result of ribosome stalling. In terms of biological role, catalyzes the release of premature peptidyl moieties from peptidyl-tRNA molecules trapped in stalled 50S ribosomal subunits, and thus maintains levels of free tRNAs and 50S ribosomes. This chain is Peptidyl-tRNA hydrolase, found in Alkaliphilus oremlandii (strain OhILAs) (Clostridium oremlandii (strain OhILAs)).